A 53-amino-acid chain; its full sequence is Beta-defensin C7 (53 aa).

3 disulfides stabilise this stretch: cysteine 20-cysteine 49, cysteine 27-cysteine 42, and cysteine 32-cysteine 50.

Belongs to the beta-defensin family.

Its subcellular location is the secreted. Its function is as follows. Has bactericidal activity. This is Beta-defensin C7 from Bos taurus (Bovine).